Reading from the N-terminus, the 302-residue chain is Pathogenicity locus probable regulatory protein HrpS (302 aa).

The Sigma-54 factor interaction domain maps to 9–237; it reads DDLDAERVPN…LKAAAKRHVL (229 aa). ATP is bound by residues 37-44 and 99-108; these read GETGTGKD and AQGGTLYLDE. A DNA-binding region (H-T-H motif) is located at residues 279 to 298; the sequence is IDAASLELDIPRRTLYRRIK.

Its function is as follows. Regulates the activation of the sigma factor HrpL which itself induces the expression of hprD as well as other hrp loci which are involved in plant pathogenicity, hrmA and avr genes. Probably interacts with sigma-54. The protein is Pathogenicity locus probable regulatory protein HrpS (hrpS) of Pseudomonas syringae pv. syringae.